A 377-amino-acid chain; its full sequence is MLSTKFTLRSHKSSVTYIYQDPRTPFNLFTADSSGLIINWDLTIRRPKKSWQAHTDTILTISTIHNHLLTHSRDNTIKIWDESYSCILEIPCNALNFSNICVINDLLITPASINSNNLDVYKIDKDWQITRLIFDFDVYKLVNKGEIIEEIGSSGTSRNDFGIIMQMKIIHTNTTTTTSENNSDYIIYVGFESGDIVGLQLILPRARILSTTGNTNDKTLINQSAKFILQYHNSTHVPNPVICLSNLDSVLVSGSTTNKVIIHSDPIEIMKMDHSGIQAIVNFKNDRLIFGYWNGYIQYGDISINQSLPKLGNTEQEKSKLTKKLTFMTILNESNQETLQSPTGKSKYSVLLKSKRNLVSPLLLAGYEDGSILAYNI.

5 WD repeats span residues 10–50 (SHKS…PKKS), 53–91 (AHTDTILTISTIHNHLLTHSRDNTIKIWDESYSCILEIP), 230–262 (QYHNSTHVPNPVICLSNLDSVLVSGSTTNKVII), 263–303 (HSDP…GDIS), and 342–377 (PTGKSKYSVLLKSKRNLVSPLLLAGYEDGSILAYNI).

The protein belongs to the WD repeat ASA1 family. In terms of assembly, component of the ASTRA chromatin remodeling machinery complex.

The protein resides in the nucleus. Its function is as follows. Component of the ASTRA complex involved in chromatin remodeling. The polypeptide is ASTRA-associated protein 1 (ASA1) (Candida albicans (strain WO-1) (Yeast)).